Consider the following 144-residue polypeptide: Prefoldin subunit alpha (144 aa).

Belongs to the prefoldin subunit alpha family. Heterohexamer of two alpha and four beta subunits.

The protein resides in the cytoplasm. Its function is as follows. Molecular chaperone capable of stabilizing a range of proteins. Seems to fulfill an ATP-independent, HSP70-like function in archaeal de novo protein folding. In Methanococcus maripaludis (strain DSM 14266 / JCM 13030 / NBRC 101832 / S2 / LL), this protein is Prefoldin subunit alpha.